The sequence spans 275 residues: Vitamin B12-binding protein (275 aa).

Residues 1–27 form the signal peptide; sequence MKWIKSTGSIGLSLLLFLSSFSHSLYA. Residues 31-275 enclose the Fe/B12 periplasmic-binding domain; it reads RVISLSPSTT…LCQQLNDNGS (245 aa). Tyr58 lines the cyanocob(III)alamin pocket. Cysteines 191 and 267 form a disulfide.

The protein belongs to the BtuF family. In terms of assembly, the complex is composed of two ATP-binding proteins (BtuD), two transmembrane proteins (BtuC) and a solute-binding protein (BtuF).

The protein localises to the periplasm. Functionally, part of the ABC transporter complex BtuCDF involved in vitamin B12 import. Binds vitamin B12 and delivers it to the periplasmic surface of BtuC. In Photorhabdus laumondii subsp. laumondii (strain DSM 15139 / CIP 105565 / TT01) (Photorhabdus luminescens subsp. laumondii), this protein is Vitamin B12-binding protein.